Reading from the N-terminus, the 236-residue chain is 2-C-methyl-D-erythritol 4-phosphate cytidylyltransferase (236 aa).

Belongs to the IspD/TarI cytidylyltransferase family. IspD subfamily. Homodimer.

The catalysed reaction is 2-C-methyl-D-erythritol 4-phosphate + CTP + H(+) = 4-CDP-2-C-methyl-D-erythritol + diphosphate. It functions in the pathway isoprenoid biosynthesis; isopentenyl diphosphate biosynthesis via DXP pathway; isopentenyl diphosphate from 1-deoxy-D-xylulose 5-phosphate: step 2/6. Functionally, catalyzes the formation of 4-diphosphocytidyl-2-C-methyl-D-erythritol from CTP and 2-C-methyl-D-erythritol 4-phosphate (MEP). This Shigella flexneri serotype 5b (strain 8401) protein is 2-C-methyl-D-erythritol 4-phosphate cytidylyltransferase.